The following is a 145-amino-acid chain: Phospholipase A2 (145 aa).

An N-terminal signal peptide occupies residues 1–15 (MRLLVLAALLTVGAG). The residue at position 16 (Gln-16) is a Pyrrolidone carboxylic acid. The propeptide at 16–22 (QAGLNSR) is removed by trypsin. Cystine bridges form between Cys-33-Cys-99, Cys-49-Cys-145, Cys-51-Cys-67, Cys-66-Cys-127, Cys-73-Cys-120, Cys-83-Cys-113, and Cys-106-Cys-118. Residues Tyr-50, Gly-52, and Gly-54 each coordinate Ca(2+). His-70 is a catalytic residue. Residue Asp-71 coordinates Ca(2+). The active site involves Asp-121.

Belongs to the phospholipase A2 family. As to quaternary structure, monomer or homodimer. The cofactor is Ca(2+). In terms of processing, activated by trypsin cleavage in the duodenum. Can also be activated by thrombin or autocatalytically.

Its subcellular location is the secreted. The enzyme catalyses a 1,2-diacyl-sn-glycero-3-phosphocholine + H2O = a 1-acyl-sn-glycero-3-phosphocholine + a fatty acid + H(+). The catalysed reaction is 1,2-ditetradecanoyl-sn-glycero-3-phosphocholine + H2O = 1-tetradecanoyl-sn-glycero-3-phosphocholine + tetradecanoate + H(+). It catalyses the reaction 1,2-dihexadecanoyl-sn-glycero-3-phosphocholine + H2O = 1-hexadecanoyl-sn-glycero-3-phosphocholine + hexadecanoate + H(+). It carries out the reaction 1-hexadecanoyl-2-(9Z-octadecenoyl)-sn-glycero-3-phosphocholine + H2O = 1-hexadecanoyl-sn-glycero-3-phosphocholine + (9Z)-octadecenoate + H(+). The enzyme catalyses 1-hexadecanoyl-2-(5Z,8Z,11Z,14Z-eicosatetraenoyl)-sn-glycero-3-phosphocholine + H2O = 1-hexadecanoyl-sn-glycero-3-phosphocholine + (5Z,8Z,11Z,14Z)-eicosatetraenoate + H(+). The catalysed reaction is 1-hexadecanoyl-2-(9Z-octadecenoyl)-sn-glycero-3-phospho-(1'-sn-glycerol) + H2O = 1-hexadecanoyl-sn-glycero-3-phospho-(1'-sn-glycerol) + (9Z)-octadecenoate + H(+). It catalyses the reaction N-hexadecanoyl-1,2-di-(9Z-octadecenoyl)-sn-glycero-3-phosphoethanolamine + H2O = N-hexadecanoyl-1-(9Z-octadecenoyl)-sn-glycero-3-phosphoethanolamine + (9Z)-octadecenoate + H(+). It carries out the reaction 1-hexadecanoyl-2-(9Z,12Z-octadecadienoyl)-sn-glycero-3-phosphoethanolamine + H2O = 1-hexadecanoyl-sn-glycero-3-phosphoethanolamine + (9Z,12Z)-octadecadienoate + H(+). The enzyme catalyses N,1-dihexadecanoyl-2-(9Z,12Z-octadecadienoyl)-sn-glycero-3-phosphoethanolamine + H2O = N,1-dihexadecanoyl-sn-glycero-3-phosphoethanolamine + (9Z,12Z)-octadecadienoate + H(+). In terms of biological role, secretory calcium-dependent phospholipase A2 that primarily targets dietary phospholipids in the intestinal tract. Hydrolyzes the ester bond of the fatty acyl group attached at sn-2 position of phospholipids (phospholipase A2 activity) with preference for phosphatidylethanolamines and phosphatidylglycerols over phosphatidylcholines. May play a role in the biosynthesis of N-acyl ethanolamines that regulate energy metabolism and inflammation in the intestinal tract. Hydrolyzes N-acyl phosphatidylethanolamines to N-acyl lysophosphatidylethanolamines, which are further cleaved by a lysophospholipase D to release N-acyl ethanolamines. May act in an autocrine and paracrine manner. Has anti-helminth activity in a process regulated by gut microbiota. Upon helminth infection of intestinal epithelia, directly affects phosphatidylethanolamine contents in the membrane of helminth larvae, likely controlling an array of phospholipid-mediated cellular processes such as membrane fusion and cell division while providing for better immune recognition, ultimately reducing larvae integrity and infectivity. This is Phospholipase A2 (PLA2G1B) from Bos taurus (Bovine).